The following is a 137-amino-acid chain: Lysozyme (137 aa).

Residues 1–20 (MQRLLGSIVILATVFTFCEA) form the signal peptide. The I-type lysozyme domain occupies 21-135 (TISSACLRCI…EKVHQQGCNV (115 aa)). 6 cysteine pairs are disulfide-bonded: Cys-26/Cys-102, Cys-31/Cys-37, Cys-42/Cys-51, Cys-64/Cys-84, Cys-74/Cys-80, and Cys-98/Cys-116. The Proton donor role is filled by Glu-34. Asp-45 (nucleophile) is an active-site residue. A substrate-binding site is contributed by 57-63 (KENYWED). Residues Tyr-88 and 109–111 (HNG) each bind substrate.

This sequence belongs to the glycosyl hydrolase 22 family. Type-I lysozyme subfamily. As to expression, expressed in the basophil cells of the oyster digestive gland.

The protein resides in the secreted. It catalyses the reaction Hydrolysis of (1-&gt;4)-beta-linkages between N-acetylmuramic acid and N-acetyl-D-glucosamine residues in a peptidoglycan and between N-acetyl-D-glucosamine residues in chitodextrins.. Functionally, has bacteriolytic activity. May play a role in digestion and in the host defense mechanisms against invading microbes. This Magallana gigas (Pacific oyster) protein is Lysozyme (lysoz).